The chain runs to 274 residues: 2,3,4,5-tetrahydropyridine-2,6-dicarboxylate N-succinyltransferase (274 aa).

Residues R104 and D141 each coordinate substrate.

This sequence belongs to the transferase hexapeptide repeat family. Homotrimer.

The protein resides in the cytoplasm. The catalysed reaction is (S)-2,3,4,5-tetrahydrodipicolinate + succinyl-CoA + H2O = (S)-2-succinylamino-6-oxoheptanedioate + CoA. It functions in the pathway amino-acid biosynthesis; L-lysine biosynthesis via DAP pathway; LL-2,6-diaminopimelate from (S)-tetrahydrodipicolinate (succinylase route): step 1/3. The polypeptide is 2,3,4,5-tetrahydropyridine-2,6-dicarboxylate N-succinyltransferase (Escherichia coli O6:H1 (strain CFT073 / ATCC 700928 / UPEC)).